We begin with the raw amino-acid sequence, 540 residues long: Putative sel1-like repeat-containing protein R815 (540 aa).

Sel1-like repeat units lie at residues 129–164, 165–200, 201–236, 237–272, 273–308, and 309–344; these read IDAQ…YKEN, LFGL…KHNY, PAVK…NQGY, PLAQ…NNGC, LYAT…SENY, and LLAI…NSTK.

This chain is Putative sel1-like repeat-containing protein R815, found in Acanthamoeba polyphaga (Amoeba).